We begin with the raw amino-acid sequence, 295 residues long: Probable endonuclease lcl3 (295 aa).

Positions M1 to S35 are disordered. A compositionally biased stretch (basic and acidic residues) spans A17 to A27. The helical transmembrane segment at F52 to I74 threads the bilayer. The TNase-like domain maps to R96–D263. The active site involves R147. Residue D152 coordinates Ca(2+). Catalysis depends on residues E155 and R195.

It belongs to the LCL3 family.

The protein localises to the mitochondrion. The protein resides in the membrane. This chain is Probable endonuclease lcl3 (lcl3), found in Neosartorya fischeri (strain ATCC 1020 / DSM 3700 / CBS 544.65 / FGSC A1164 / JCM 1740 / NRRL 181 / WB 181) (Aspergillus fischerianus).